We begin with the raw amino-acid sequence, 543 residues long: Glucose-6-phosphate isomerase (543 aa).

Catalysis depends on glutamate 351, which acts as the Proton donor. Catalysis depends on residues histidine 382 and lysine 511.

The protein belongs to the GPI family.

Its subcellular location is the cytoplasm. It carries out the reaction alpha-D-glucose 6-phosphate = beta-D-fructose 6-phosphate. Its pathway is carbohydrate biosynthesis; gluconeogenesis. It participates in carbohydrate degradation; glycolysis; D-glyceraldehyde 3-phosphate and glycerone phosphate from D-glucose: step 2/4. In terms of biological role, catalyzes the reversible isomerization of glucose-6-phosphate to fructose-6-phosphate. The chain is Glucose-6-phosphate isomerase from Hydrogenovibrio crunogenus (strain DSM 25203 / XCL-2) (Thiomicrospira crunogena).